We begin with the raw amino-acid sequence, 293 residues long: Fructokinase (293 aa).

Threonine 133 lines the ATP pocket. Residues histidine 156, cysteine 174, histidine 177, and cysteine 180 each coordinate Zn(2+). Residues proline 188 and 236–240 (GVMAQ) contribute to the ATP site.

It belongs to the ROK (NagC/XylR) family. Requires Mg(2+) as cofactor.

It catalyses the reaction D-fructose + ATP = D-fructose 6-phosphate + ADP + H(+). With respect to regulation, inhibition by zinc ions. The polypeptide is Fructokinase (scrK) (Streptococcus mutans serotype c (strain ATCC 700610 / UA159)).